The primary structure comprises 235 residues: Large ribosomal subunit protein uL1 (235 aa).

This sequence belongs to the universal ribosomal protein uL1 family. In terms of assembly, part of the 50S ribosomal subunit.

Functionally, binds directly to 23S rRNA. The L1 stalk is quite mobile in the ribosome, and is involved in E site tRNA release. Protein L1 is also a translational repressor protein, it controls the translation of the L11 operon by binding to its mRNA. The protein is Large ribosomal subunit protein uL1 of Mycolicibacterium vanbaalenii (strain DSM 7251 / JCM 13017 / BCRC 16820 / KCTC 9966 / NRRL B-24157 / PYR-1) (Mycobacterium vanbaalenii).